Here is a 152-residue protein sequence, read N- to C-terminus: Deoxyuridine 5'-triphosphate nucleotidohydrolase (152 aa).

Substrate is bound by residues 71–73 (RSG), Asn-84, 88–90 (LID), and Met-98.

This sequence belongs to the dUTPase family. The cofactor is Mg(2+).

The enzyme catalyses dUTP + H2O = dUMP + diphosphate + H(+). The protein operates within pyrimidine metabolism; dUMP biosynthesis; dUMP from dCTP (dUTP route): step 2/2. This enzyme is involved in nucleotide metabolism: it produces dUMP, the immediate precursor of thymidine nucleotides and it decreases the intracellular concentration of dUTP so that uracil cannot be incorporated into DNA. The protein is Deoxyuridine 5'-triphosphate nucleotidohydrolase of Shewanella denitrificans (strain OS217 / ATCC BAA-1090 / DSM 15013).